A 353-amino-acid polypeptide reads, in one-letter code: Photosystem II protein D1 (353 aa).

Position 2 is an N-acetylthreonine (threonine 2). Threonine 2 carries the phosphothreonine modification. The next 3 helical transmembrane spans lie at 29–46, 118–133, and 142–156; these read YIGWFGVLMIPTLLTATS, HFLLGVACYMGREWEL, and WIAVAYSAPVAAAAA. Histidine 118 contacts chlorophyll a. Residue tyrosine 126 coordinates pheophytin a. Residues aspartate 170 and glutamate 189 each coordinate [CaMn4O5] cluster. Residues 197 to 218 form a helical membrane-spanning segment; the sequence is FHMLGVAGVFGGSLFSAMHGSL. Position 198 (histidine 198) interacts with chlorophyll a. A quinone contacts are provided by residues histidine 215 and 264 to 265; that span reads SF. Histidine 215 is a binding site for Fe cation. Residue histidine 272 participates in Fe cation binding. A helical membrane pass occupies residues 274–288; that stretch reads FLAAWPVVGIWFTAL. Residues histidine 332, glutamate 333, aspartate 342, and alanine 344 each coordinate [CaMn4O5] cluster. Residues 345-353 constitute a propeptide that is removed on maturation; it reads AVEAPSTNG.

The protein belongs to the reaction center PufL/M/PsbA/D family. As to quaternary structure, PSII is composed of 1 copy each of membrane proteins PsbA, PsbB, PsbC, PsbD, PsbE, PsbF, PsbH, PsbI, PsbJ, PsbK, PsbL, PsbM, PsbT, PsbX, PsbY, PsbZ, Psb30/Ycf12, at least 3 peripheral proteins of the oxygen-evolving complex and a large number of cofactors. It forms dimeric complexes. Requires The D1/D2 heterodimer binds P680, chlorophylls that are the primary electron donor of PSII, and subsequent electron acceptors. It shares a non-heme iron and each subunit binds pheophytin, quinone, additional chlorophylls, carotenoids and lipids. D1 provides most of the ligands for the Mn4-Ca-O5 cluster of the oxygen-evolving complex (OEC). There is also a Cl(-1) ion associated with D1 and D2, which is required for oxygen evolution. The PSII complex binds additional chlorophylls, carotenoids and specific lipids. as cofactor. In terms of processing, tyr-161 forms a radical intermediate that is referred to as redox-active TyrZ, YZ or Y-Z. C-terminally processed by CTPA; processing is essential to allow assembly of the oxygen-evolving complex and thus photosynthetic growth.

The protein resides in the plastid. Its subcellular location is the chloroplast thylakoid membrane. The enzyme catalyses 2 a plastoquinone + 4 hnu + 2 H2O = 2 a plastoquinol + O2. Functionally, photosystem II (PSII) is a light-driven water:plastoquinone oxidoreductase that uses light energy to abstract electrons from H(2)O, generating O(2) and a proton gradient subsequently used for ATP formation. It consists of a core antenna complex that captures photons, and an electron transfer chain that converts photonic excitation into a charge separation. The D1/D2 (PsbA/PsbD) reaction center heterodimer binds P680, the primary electron donor of PSII as well as several subsequent electron acceptors. The sequence is that of Photosystem II protein D1 from Nandina domestica (Heavenly bamboo).